Here is a 198-residue protein sequence, read N- to C-terminus: Recombination protein RecR (198 aa).

The C4-type zinc-finger motif lies at 57-72 (CPVCFNITDAERCDVC). Positions 80-173 (NLICVVEEPG…VVSRIAYGLP (94 aa)) constitute a Toprim domain.

Belongs to the RecR family.

May play a role in DNA repair. It seems to be involved in an RecBC-independent recombinational process of DNA repair. It may act with RecF and RecO. This Deinococcus deserti (strain DSM 17065 / CIP 109153 / LMG 22923 / VCD115) protein is Recombination protein RecR.